Here is a 333-residue protein sequence, read N- to C-terminus: Mitochondrial 2-oxoglutarate/malate carrier protein (333 aa).

3 Solcar repeats span residues 29–127 (FRLI…LFER), 136–227 (PGFL…SKQF), and 236–325 (DNIL…MNKA). The next 6 membrane-spanning stretches (helical) occupy residues 30–61 (RLIA…VQPL), 102–120 (GLSA…RLGI), 138–159 (FLLK…GTPA), 202–221 (GCIP…LASY), 241–259 (HFCA…SMPV), and 300–319 (GFTP…FIFL).

This sequence belongs to the mitochondrial carrier (TC 2.A.29) family. In terms of assembly, interacts with SMIM26.

Its subcellular location is the membrane. It catalyses the reaction (S)-malate(in) + 2-oxoglutarate(out) = (S)-malate(out) + 2-oxoglutarate(in). The enzyme catalyses malonate(in) + 2-oxoglutarate(out) = malonate(out) + 2-oxoglutarate(in). It carries out the reaction succinate(in) + 2-oxoglutarate(out) = succinate(out) + 2-oxoglutarate(in). The catalysed reaction is maleate(in) + 2-oxoglutarate(out) = maleate(out) + 2-oxoglutarate(in). It catalyses the reaction oxaloacetate(in) + 2-oxoglutarate(out) = oxaloacetate(out) + 2-oxoglutarate(in). Functionally, catalyzes the transport of 2-oxoglutarate (alpha-oxoglutarate) across the inner mitochondrial membrane in an electroneutral exchange for malate. Can also exchange 2-oxoglutarate for other dicarboxylic acids such as malonate, succinate, maleate and oxaloacetate, although with lower affinity. Contributes to several metabolic processes, including the malate-aspartate shuttle, the oxoglutarate/isocitrate shuttle, in gluconeogenesis from lactate, and in nitrogen metabolism. Maintains mitochondrial fusion and fission events, and the organization and morphology of cristae. Involved in the regulation of apoptosis. Helps protect from cytotoxic-induced apoptosis by modulating glutathione levels in mitochondria. The sequence is that of Mitochondrial 2-oxoglutarate/malate carrier protein (SLC25A11) from Sus scrofa (Pig).